We begin with the raw amino-acid sequence, 411 residues long: Serine hydroxymethyltransferase (411 aa).

Gly120 to Leu122 contacts (6S)-5,6,7,8-tetrahydrofolate. Lys225 carries the N6-(pyridoxal phosphate)lysine modification. A (6S)-5,6,7,8-tetrahydrofolate-binding site is contributed by Ser350–Phe352.

It belongs to the SHMT family. As to quaternary structure, homodimer. The cofactor is pyridoxal 5'-phosphate.

The protein localises to the cytoplasm. The catalysed reaction is (6R)-5,10-methylene-5,6,7,8-tetrahydrofolate + glycine + H2O = (6S)-5,6,7,8-tetrahydrofolate + L-serine. The protein operates within one-carbon metabolism; tetrahydrofolate interconversion. Its pathway is amino-acid biosynthesis; glycine biosynthesis; glycine from L-serine: step 1/1. In terms of biological role, catalyzes the reversible interconversion of serine and glycine with tetrahydrofolate (THF) serving as the one-carbon carrier. This reaction serves as the major source of one-carbon groups required for the biosynthesis of purines, thymidylate, methionine, and other important biomolecules. Also exhibits THF-independent aldolase activity toward beta-hydroxyamino acids, producing glycine and aldehydes, via a retro-aldol mechanism. This Limosilactobacillus reuteri (strain DSM 20016) (Lactobacillus reuteri) protein is Serine hydroxymethyltransferase.